The primary structure comprises 107 residues: QIVLTQSPAIMSASPGQKVTMTCSASSSVSYMHWYQQKSGTSPKRWIYDTSKLASGXPARFSGSGSATSYSLTITSMQAEDAATYYCQQWSSNPLTFGAGTKLELKR.

A framework-1 region spans residues 1–23 (QIVLTQSPAIMSASPGQKVTMTC). The cysteines at positions 23 and 87 are disulfide-linked. The complementarity-determining-1 stretch occupies residues 24 to 33 (SASSSVSYMH). Residues 34–48 (WYQQKSGTSPKRWIY) form a framework-2 region. The segment at 49-55 (DTSKLAS) is complementarity-determining-2. A framework-3 region spans residues 56–87 (GXPARFSGSGSATSYSLTITSMQAEDAATYYC). A complementarity-determining-3 region spans residues 88–96 (QQWSSNPLT). Residues 97–106 (FGAGTKLELK) form a framework-4 region.

In terms of biological role, anti-2-phenyl oxazolone (PHOX) Antibody. In Mus musculus (Mouse), this protein is Ig kappa chain V-VI region NQ6-8.3.1.